The sequence spans 148 residues: Nucleoside diphosphate kinase 1 (148 aa).

Residues Lys9, Phe57, Arg85, Thr91, Arg102, and Asn112 each coordinate ATP. His115 acts as the Pros-phosphohistidine intermediate in catalysis.

The protein belongs to the NDK family. Mg(2+) serves as cofactor.

It carries out the reaction a 2'-deoxyribonucleoside 5'-diphosphate + ATP = a 2'-deoxyribonucleoside 5'-triphosphate + ADP. The catalysed reaction is a ribonucleoside 5'-diphosphate + ATP = a ribonucleoside 5'-triphosphate + ADP. In terms of biological role, major role in the synthesis of nucleoside triphosphates other than ATP. The ATP gamma phosphate is transferred to the NDP beta phosphate via a ping-pong mechanism, using a phosphorylated active-site intermediate. The polypeptide is Nucleoside diphosphate kinase 1 (Nicotiana tabacum (Common tobacco)).